The following is a 508-amino-acid chain: Histidine ammonia-lyase (508 aa).

Residues 139–141 (ASG) constitute a cross-link (5-imidazolinone (Ala-Gly)). Serine 140 bears the 2,3-didehydroalanine (Ser) mark.

This sequence belongs to the PAL/histidase family. In terms of processing, contains an active site 4-methylidene-imidazol-5-one (MIO), which is formed autocatalytically by cyclization and dehydration of residues Ala-Ser-Gly.

The protein resides in the cytoplasm. It carries out the reaction L-histidine = trans-urocanate + NH4(+). It participates in amino-acid degradation; L-histidine degradation into L-glutamate; N-formimidoyl-L-glutamate from L-histidine: step 1/3. This is Histidine ammonia-lyase from Acidiphilium cryptum (strain JF-5).